A 554-amino-acid polypeptide reads, in one-letter code: Hydroxylamine reductase (554 aa).

[2Fe-2S] cluster contacts are provided by C3, C6, C18, and C25. The hybrid [4Fe-2O-2S] cluster site is built by H252, E276, C320, C408, C436, C461, E495, and K497. C408 carries the cysteine persulfide modification.

The protein belongs to the HCP family. [2Fe-2S] cluster serves as cofactor. The cofactor is hybrid [4Fe-2O-2S] cluster.

It is found in the cytoplasm. The enzyme catalyses A + NH4(+) + H2O = hydroxylamine + AH2 + H(+). In terms of biological role, catalyzes the reduction of hydroxylamine to form NH(3) and H(2)O. The sequence is that of Hydroxylamine reductase from Shewanella putrefaciens (strain CN-32 / ATCC BAA-453).